The following is a 250-amino-acid chain: Triosephosphate isomerase (250 aa).

Position 9 to 11 (9 to 11 (NWK)) interacts with substrate. His-95 (electrophile) is an active-site residue. Glu-167 serves as the catalytic Proton acceptor. Substrate-binding positions include Gly-173, Ser-213, and 234-235 (GG).

This sequence belongs to the triosephosphate isomerase family. In terms of assembly, homodimer.

Its subcellular location is the cytoplasm. It carries out the reaction D-glyceraldehyde 3-phosphate = dihydroxyacetone phosphate. It functions in the pathway carbohydrate biosynthesis; gluconeogenesis. It participates in carbohydrate degradation; glycolysis; D-glyceraldehyde 3-phosphate from glycerone phosphate: step 1/1. Involved in the gluconeogenesis. Catalyzes stereospecifically the conversion of dihydroxyacetone phosphate (DHAP) to D-glyceraldehyde-3-phosphate (G3P). The polypeptide is Triosephosphate isomerase (Flavobacterium psychrophilum (strain ATCC 49511 / DSM 21280 / CIP 103535 / JIP02/86)).